We begin with the raw amino-acid sequence, 120 residues long: Acylphosphatase-1 (120 aa).

Ala-2 bears the N-acetylalanine mark. The region spanning 8–98 (SCEFEVFGRV…YGYANFHIKP (91 aa)) is the Acylphosphatase-like domain. Residues Arg-23 and Asn-41 contribute to the active site. Residues 91–120 (YANFHIKPDPHENRPVHEGLGSSSSHHDSN) form a disordered region. Residues 96-107 (IKPDPHENRPVH) are compositionally biased toward basic and acidic residues.

It belongs to the acylphosphatase family.

It is found in the cytoplasm. The enzyme catalyses an acyl phosphate + H2O = a carboxylate + phosphate + H(+). This is Acylphosphatase-1 (Acyp) from Drosophila melanogaster (Fruit fly).